The following is a 341-amino-acid chain: Malate dehydrogenase 1, mitochondrial (341 aa).

The transit peptide at 1-22 (MFRSMLVRSSASAKQAVIRRSF) directs the protein to the mitochondrion. NAD(+) is bound by residues 36 to 42 (GAAGGIG) and D62. Substrate is bound by residues R109 and R115. NAD(+)-binding positions include N122 and 145-147 (ISN). Residues N147 and R181 each contribute to the substrate site. The active-site Proton acceptor is H205. M256 is an NAD(+) binding site.

It belongs to the LDH/MDH superfamily. MDH type 1 family. Homodimer. In terms of processing, forms intramolecular disulfide bonds. As to expression, expressed in rosette leaves.

It localises to the mitochondrion matrix. It catalyses the reaction (S)-malate + NAD(+) = oxaloacetate + NADH + H(+). Its activity is regulated as follows. Negatively regulated by ATP. Not redox-regulated. The formation of intramolecular disulfide bonds does not alter enzymatic activity. Functionally, catalyzes a reversible NAD-dependent dehydrogenase reaction involved in central metabolism and redox homeostasis between organelle compartments. Required for carbon dioxide and energy partitioning in leaves. May limit photorespiration during the dark phase. Its activity is essential to shuttle reductants out from the mitochondria to support the photorespiratory flux. Can convert 2-oxoglutarate to (S)-2-hydroxyglutarate in vitro. In Arabidopsis thaliana (Mouse-ear cress), this protein is Malate dehydrogenase 1, mitochondrial.